The following is a 355-amino-acid chain: tRNA uridine(34) hydroxylase (355 aa).

The Rhodanese domain maps to 146 to 240 (DDPDTVFVDM…YARQAKAQGL (95 aa)). The active-site Cysteine persulfide intermediate is the Cys-200.

The protein belongs to the TrhO family.

It carries out the reaction uridine(34) in tRNA + AH2 + O2 = 5-hydroxyuridine(34) in tRNA + A + H2O. Catalyzes oxygen-dependent 5-hydroxyuridine (ho5U) modification at position 34 in tRNAs. This chain is tRNA uridine(34) hydroxylase, found in Pectobacterium atrosepticum (strain SCRI 1043 / ATCC BAA-672) (Erwinia carotovora subsp. atroseptica).